The following is a 238-amino-acid chain: Protein odd-skipped-related 2 (238 aa).

The interval 105 to 126 is disordered; sequence EDPPVTGQSRLSPERRPARGRL. 3 consecutive C2H2-type zinc fingers follow at residues 134–156, 162–184, and 190–212; these read FICR…ERTH, YTCD…RYIH, and FKCQ…KTLH.

Belongs to the Odd C2H2-type zinc-finger protein family. At the 8-somite stage, expressed in the pronephros, with weak generalized expression elsewhere. At 24 hpf, expressed in the kidney tubules and the anterior duct, and also in the gut. At 60 hpf, expressed in the tubules and the pectoral fin buds.

The protein localises to the nucleus. In terms of biological role, transcriptional repressor. Required for pronephric kidney development. In Danio rerio (Zebrafish), this protein is Protein odd-skipped-related 2.